A 178-amino-acid chain; its full sequence is Protein SPEAR1 (178 aa).

Disordered stretches follow at residues 1 to 48 and 139 to 178; these read MGST…QRGL and HFLNEDPSSTTRRSKSLGSGIQHSGSSENQEVDLELRLSL. A compositionally biased stretch (low complexity) spans 14–28; the sequence is SSPPSSSPTSSSSSP. Residues 46–54 carry the SPL motif; sequence RGLGVAQLE. Over residues 144–167 the composition is skewed to polar residues; that stretch reads DPSSTTRRSKSLGSGIQHSGSSEN. Positions 170–176 match the EAR motif; it reads VDLELRL.

As to quaternary structure, interacts with SPL and SPEAR2. As to expression, not detected in leaves.

In terms of biological role, adapter-like transcriptional repressor recruiting TPL/TPR corepressors to inhibit TCP transcription factors. In Arabidopsis thaliana (Mouse-ear cress), this protein is Protein SPEAR1.